The sequence spans 272 residues: Anamorsin homolog (272 aa).

An N-terminal SAM-like domain region spans residues 1-156 (MDSMMNQKTV…KIGSSFALKK (156 aa)). The segment at 157 to 185 (PVTNLFKIDLDDDVDLIDEDSLLTEEDLM) is linker. Residues Cys195, Cys202, Cys205, and Cys207 each coordinate [2Fe-2S] cluster. Positions 195–207 (CETTKKACKNCVC) are fe-S binding site A. The [4Fe-4S] cluster site is built by Cys233, Cys236, Cys244, and Cys247. 2 short sequence motifs (cx2C motif) span residues 233–236 (CGSC) and 244–247 (CGTC). Residues 233–247 (CGSCGLGDAFRCGTC) form a fe-S binding site B region.

It belongs to the anamorsin family. In terms of assembly, monomer. Interacts with ATR3. [2Fe-2S] cluster is required as a cofactor. It depends on [4Fe-4S] cluster as a cofactor.

The protein resides in the cytoplasm. It localises to the mitochondrion intermembrane space. Component of the cytosolic iron-sulfur (Fe-S) protein assembly (CIA) machinery. Required for the maturation of extramitochondrial Fe-S proteins. Part of an electron transfer chain functioning in an early step of cytosolic Fe-S biogenesis, facilitating the de novo assembly of a [4Fe-4S] cluster on the cytosolic Fe-S scaffold complex. Electrons are transferred from NADPH via FAD- and FMN-containing diflavin oxidoreductase TAH18/ATR3. Together with the diflavin oxidoreductase, also required for the assembly of the diferric tyrosyl radical cofactor of ribonucleotide reductase (RNR), probably by providing electrons for reduction during radical cofactor maturation in the catalytic small subunit. Required for embryo development. In Arabidopsis thaliana (Mouse-ear cress), this protein is Anamorsin homolog.